A 193-amino-acid chain; its full sequence is Ion-translocating oxidoreductase complex subunit A (193 aa).

Helical transmembrane passes span 5–25 (LLLF…FLGL), 39–59 (IGMG…AWMV), 62–82 (FILL…LVIA), 102–122 (LLGI…VALL), 134–154 (AVYG…FAAI), and 171–191 (SIAL…TGLV).

It belongs to the NqrDE/RnfAE family. As to quaternary structure, the complex is composed of six subunits: RnfA, RnfB, RnfC, RnfD, RnfE and RnfG.

Its subcellular location is the cell inner membrane. Functionally, part of a membrane-bound complex that couples electron transfer with translocation of ions across the membrane. This chain is Ion-translocating oxidoreductase complex subunit A, found in Yersinia pestis bv. Antiqua (strain Nepal516).